We begin with the raw amino-acid sequence, 562 residues long: MGDMKYTELSDLYRRLEKTTLKTLKTKFVADFLKKTPDELLEVVPYLILGKVFPDWDERELGVGEKLLIKAVSMATGVQEREIENSVKDTGDLGESVALALKKKKQKSFFSQPLTIKRVYQTFIKIAEASGEGSQDRKLKYLANIFMDAQPEEGKYIARTVLGMMRTGVAEGILRDAIAEAFKVKAELVERAYMLTSDFGYVAKVAKLEGNDGLGKVHIQIGKPIRPMLAQNAASVKEALLEMGAEAAFEIKYDGARVQVHKDGDRVVIYSRRLENVTRSIPEVVDAIKASIKSEKAIVEGELVAVGEGGRPRPFQYVLRRFRRKYNIEEMIEKIPLELNLFDVLYVDGEPLIDTPFRERRAKLEEIVEEGEKLKLAQQLVTKKVEEAEEFYKKALELGHEGLMAKRLDSVYEPGNRGKKWLKIKPTMEDLDLVIIGAEWGEGRRAHLLGSFLVAAYDPHSGEFVPVGKVGSGFTDEDLVEFTKMLKPLIIGGEGKFVEIEPKVVIQVTYQEIQKSPKYRSGFALRFPRYVALREDKSPEEADTIERIAQLYEFQERFKAKK.

Glu-250 provides a ligand contact to ATP. Catalysis depends on Lys-252, which acts as the N6-AMP-lysine intermediate. Residues Arg-257, Arg-272, Glu-302, Phe-342, Arg-417, and Lys-423 each contribute to the ATP site.

It belongs to the ATP-dependent DNA ligase family. Mg(2+) is required as a cofactor. It depends on Zn(2+) as a cofactor.

The catalysed reaction is ATP + (deoxyribonucleotide)n-3'-hydroxyl + 5'-phospho-(deoxyribonucleotide)m = (deoxyribonucleotide)n+m + AMP + diphosphate.. It catalyses the reaction NAD(+) + (deoxyribonucleotide)n-3'-hydroxyl + 5'-phospho-(deoxyribonucleotide)m = (deoxyribonucleotide)n+m + AMP + beta-nicotinamide D-nucleotide.. DNA ligase that seals nicks in double-stranded DNA during DNA replication, DNA recombination and DNA repair. Can use both ATP and NAD(+), but NAD(+) may be a preferred nucleotide cofactor. This chain is DNA ligase, found in Thermococcus onnurineus (strain NA1).